The primary structure comprises 687 residues: T-box transcription factor TBX2b (687 aa).

Residues 103–276 (LWDQFHKLGT…NNPFAKGFRD (174 aa)) constitute a DNA-binding region (T-box). 2 disordered regions span residues 303 to 452 (DRDG…ESPS) and 611 to 687 (NLLT…DSPK). Composition is skewed to basic and acidic residues over residues 338–357 (GSRD…HQND), 375–400 (SRSE…RKTS), and 408–430 (NLEK…KDTE). Composition is skewed to polar residues over residues 431–451 (NSGI…TESP), 611–630 (NLLT…SSKC), and 644–654 (GASQRNGSPKT). The stretch at 654-681 (TTMKESINELQNIQRLVSGLESQRETSS) forms a coiled coil. The span at 675 to 687 (SQRETSSPRDSPK) shows a compositional bias: basic and acidic residues.

As to quaternary structure, binds DNA as a monomer. In terms of tissue distribution, expressed in the axial mesoderm, notably, in the notochordal precursor cells immediately before formation of the notochord and in the chordoneural hinge of the tail bud, after the notochord is formed. In addition, its expression is detected in the ventral forebrain, sensory neurons, fin buds and excretory system.

The protein resides in the nucleus. Transcription factor which acts as a transcriptional repressor. May also function as a transcriptional activator. Binds to the palindromic T site 5'-TTCACACCTAGGTGTGAA-3' DNA sequence, or a half-site, which are present in the regulatory region of several genes. Involved in the transcriptional regulation of genes required for mesoderm differentiation. Plays a role in the specification of late notochordal precursor cells and formation of the differentiated notochord. Required for cardiac atrioventricular canal formation. In Danio rerio (Zebrafish), this protein is T-box transcription factor TBX2b (tbx2b).